The sequence spans 220 residues: Cysteine-rich venom protein VAR5 (220 aa).

The first 22 residues, 1–22 (MILLKLYLTLAAILCQSRGTTS), serve as a signal peptide directing secretion. The SCP domain occupies 41-169 (NKHNDLRRTV…PLKYFLVCQY (129 aa)). Disulfide bonds link C77-C156, C95-C170, C151-C167, C189-C196, and C192-C201. A ShKT domain is found at 205–220 (CEHSNQYINCPDLTKQ).

The protein belongs to the CRISP family. Post-translationally, contains 8 disulfide bonds. In terms of tissue distribution, expressed by the venom gland.

The protein localises to the secreted. Functionally, blocks ryanodine receptors, and potassium channels. This Varanus acanthurus (Ridge-tailed monitor) protein is Cysteine-rich venom protein VAR5.